Here is a 244-residue protein sequence, read N- to C-terminus: Phosphoadenosine 5'-phosphosulfate reductase (244 aa).

The Nucleophile; cysteine thiosulfonate intermediate role is filled by cysteine 239.

This sequence belongs to the PAPS reductase family. CysH subfamily.

It localises to the cytoplasm. The enzyme catalyses [thioredoxin]-disulfide + sulfite + adenosine 3',5'-bisphosphate + 2 H(+) = [thioredoxin]-dithiol + 3'-phosphoadenylyl sulfate. It participates in sulfur metabolism; hydrogen sulfide biosynthesis; sulfite from sulfate: step 3/3. Functionally, catalyzes the formation of sulfite from phosphoadenosine 5'-phosphosulfate (PAPS) using thioredoxin as an electron donor. The protein is Phosphoadenosine 5'-phosphosulfate reductase of Escherichia coli (strain K12 / MC4100 / BW2952).